Here is a 328-residue protein sequence, read N- to C-terminus: Delta-aminolevulinic acid dehydratase (328 aa).

Lys200 acts as the Schiff-base intermediate with substrate in catalysis. 5-aminolevulinate-binding residues include Arg210 and Lys222. Glu238 is a binding site for Mg(2+). Lys253 serves as the catalytic Schiff-base intermediate with substrate. The 5-aminolevulinate site is built by Ser279 and Tyr318.

It belongs to the ALAD family. As to quaternary structure, homooctamer.

The catalysed reaction is 2 5-aminolevulinate = porphobilinogen + 2 H2O + H(+). It functions in the pathway porphyrin-containing compound metabolism; protoporphyrin-IX biosynthesis; coproporphyrinogen-III from 5-aminolevulinate: step 1/4. With respect to regulation, stimulated by magnesium, inhibited by zinc. In terms of biological role, catalyzes an early step in the biosynthesis of tetrapyrroles. Binds two molecules of 5-aminolevulinate per subunit, each at a distinct site, and catalyzes their condensation to form porphobilinogen. This chain is Delta-aminolevulinic acid dehydratase (hemB), found in Chlorobaculum parvum (strain DSM 263 / NCIMB 8327) (Chlorobium vibrioforme subsp. thiosulfatophilum).